A 308-amino-acid chain; its full sequence is Elongation factor Ts (308 aa).

Residues 80–83 (TDFV) form an involved in Mg(2+) ion dislocation from EF-Tu region.

The protein belongs to the EF-Ts family.

It localises to the cytoplasm. Functionally, associates with the EF-Tu.GDP complex and induces the exchange of GDP to GTP. It remains bound to the aminoacyl-tRNA.EF-Tu.GTP complex up to the GTP hydrolysis stage on the ribosome. This Rhizobium leguminosarum bv. trifolii (strain WSM2304) protein is Elongation factor Ts.